Reading from the N-terminus, the 947-residue chain is Netrin receptor unc-5 (947 aa).

Residues 43-141 (VIRNKPLRLQ…VHLAYMRKHF (99 aa)) enclose the Ig-like domain. Disulfide bonds link Cys53–Cys112, Cys160–Cys209, Cys243–Cys295, Cys247–Cys299, and Cys273–Cys285. Residues 139-226 (KHFLKSPVAQ…SRKTDPVEVQ (88 aa)) form the Ig-like C2-type domain. A glycan (N-linked (GlcNAc...) asparagine) is linked at Asn206. 2 TSP type-1 domains span residues 230 to 300 (DGGW…VPCK) and 302 to 354 (DGGW…QLCT). Residues Trp305 and Trp308 are each glycosylated (C-linked (Man) tryptophan). The chain crosses the membrane as a helical span at residues 369–389 (GSVASIFIVASFILAILAMFC). Residues 390-947 (CKRGNSKKSK…LSAFPQIVSP (558 aa)) lie on the Cytoplasmic side of the membrane. Phosphotyrosine is present on Tyr510. In terms of domain architecture, ZU5 spans 530 to 658 (NIVAAQIDSN…LNTNMFVQFE (129 aa)). One can recognise a Death domain in the interval 857–938 (ELARLLDMPN…DAVMVLERFL (82 aa)).

The protein belongs to the unc-5 family. As to quaternary structure, interacts (via cytoplasmic domain) with src-1 (via SH2 domain and SH3 domain). Interacts with madd-4. Interacts with unc-129; the interaction is direct. Phosphorylated on different cytoplasmic tyrosine residues. May be phosphorylated on tyrosine residues by src-1. Tyrosine phosphorylation is unc-6-dependent. In terms of processing, glycosylated via C-mannosylation by dpy-19 at Trp-305 and Trp-308. In terms of tissue distribution, expressed in cell bodies and axons of the VNC motor neurons that extend axons to the dorsal midline and within the ventral nerve cord. Expressed in gonadal distal tip cells (DTC).

Its subcellular location is the cell membrane. It localises to the membrane raft. The protein localises to the cell projection. It is found in the neuron projection. Receptor for netrin (unc-6) required for axon guidance. Mediates axon repulsion of neuronal growth cones in the developing nervous system upon ligand binding. Axon migration is mediated by the secreted unc-6, which promotes attraction of neurons and axons through binding to the unc-40 receptor, while repulsion requires both unc-5 and unc-40 receptors. Involved in the ventral-dorsal and anterior-posterior migration of distal tip cells along the body, which may be mediated by Wnt receptor mom-5, ced-10/Rac, ced-12/ELMO and mig-2/RhoG. This is Netrin receptor unc-5 from Caenorhabditis elegans.